The following is a 351-amino-acid chain: MDPIELEQWLSAHPPALADVIRHVAAACARISRAAARAPLAGQLGGAGSLNSQGEPQQRLDVLADACVSQALSACTHVAGWVSEEHADVTVSPEHGSGGAYLVVFDPLDGSSNVETNVAIGSIFSVLPHLFRGTPASAAAFMQPGRRQVAAGYAIYGPSTVLVLSLGQGVHMFTLDPDAPGDAARWVLTRADVEVPVSTTEFAINASNQRFWEKPVQRYVAECLAGQSGPRGRDFNMRWVASLVAEVHRILTRGGVFLYPRDSREPFRPGRLRLLYEAAPMAWLMEQAGAAATTGTGPLLELVPDALHHKVPVILGSRDEVERIVTYHEDPSANVSWQLFKTRSLFIQPQA.

Mg(2+) contacts are provided by Glu84, Asp106, Leu108, and Asp109. Residues Asp109 to Ser112 and Asn205 contribute to the substrate site. Glu277 lines the Mg(2+) pocket.

This sequence belongs to the FBPase class 1 family. Homotetramer. The cofactor is Mg(2+).

Its subcellular location is the cytoplasm. The catalysed reaction is beta-D-fructose 1,6-bisphosphate + H2O = beta-D-fructose 6-phosphate + phosphate. It functions in the pathway carbohydrate biosynthesis; Calvin cycle. The sequence is that of Fructose-1,6-bisphosphatase class 1 1 from Methylibium petroleiphilum (strain ATCC BAA-1232 / LMG 22953 / PM1).